We begin with the raw amino-acid sequence, 26 residues long: Dermaseptin-J4 (26 aa).

Valine amide is present on Val-26.

Expressed by the skin glands.

The protein resides in the secreted. Has antimicrobial activity. The sequence is that of Dermaseptin-J4 from Phasmahyla jandaia (Jandaia leaf frog).